Reading from the N-terminus, the 146-residue chain is MISFFRAFFLIIIISFLIFVGAQARTLLGNYHDDEMLIELKLESGNYGRTPYKTPPPPTSSSPTHQEIVNGRHDSVLPPPSPKTDPIIGQLTTITTTPHHDDTVAAPPVGGRHDYVASPPPPKPQDEQRQIIITSSSSTLPLQASY.

Positions 1 to 24 are cleaved as a signal peptide; it reads MISFFRAFFLIIIISFLIFVGAQA. The propeptide occupies 25-48; the sequence is RTLLGNYHDDEMLIELKLESGNYG. Residues 47 to 128 form a disordered region; the sequence is YGRTPYKTPP…PPPPKPQDEQ (82 aa). Proline 51, proline 55, proline 56, proline 57, proline 58, and proline 63 each carry 4-hydroxyproline. Residues proline 51, proline 55, proline 56, proline 57, proline 58, and proline 63 are each glycosylated (O-linked (Ara...) hydroxyproline). Positions 67–70 are excised as a propeptide; that stretch reads EIVN. 4-hydroxyproline occurs at positions 79, 80, and 82. Proline 79, proline 80, and proline 82 each carry an O-linked (Ara...) hydroxyproline glycan. Positions 86 to 110 are excised as a propeptide; that stretch reads PIIGQLTTITTTPHHDDTVAAPPVG. 4 positions are modified to 4-hydroxyproline: proline 119, proline 120, proline 121, and proline 122. O-linked (Ara...) hydroxyproline glycans are attached at residues proline 119, proline 120, proline 121, and proline 122. A propeptide spanning residues 131–146 is cleaved from the precursor; it reads IIITSSSSTLPLQASY.

Post-translationally, O-glycosylated; contains pentose side chains. As to expression, leaves.

It is found in the secreted. In terms of biological role, activates a lipid-based signal transduction pathway in which linolenic acid is converted to jasmonic acid, a potent activator of defense gene transcription. Induces synthesis of proteinase inhibitors I and II in leaves when supplied through cut stems. This chain is Hydroxyproline-rich systemin, found in Solanum lycopersicum (Tomato).